Consider the following 224-residue polypeptide: MAITDWPIEERPREKLLNRGAHALSDAELLAIFLRTGVKGKSAVDLARELLAYFGGLRPLLEASQQDFCQAQGLGNAKFSQLQAVLEMSRRHLAAALEQKTSLTSTTAVKQFVSAQLRHRQSEVFALILLNTQNQLIKFVELFNGTIDSASVYPREVVKTALSHNAAAVILAHNHPSGIAEPSEPDKAITKRLQQALQLVDIRTLDHLVVGDTEAVSFAERGWI.

In terms of domain architecture, MPN spans 102-224 (SLTSTTAVKQ…AVSFAERGWI (123 aa)). Residues histidine 173, histidine 175, and aspartate 186 each coordinate Zn(2+). Residues 173–186 (HNHPSGIAEPSEPD) carry the JAMM motif motif.

It belongs to the UPF0758 family.

The polypeptide is UPF0758 protein Sde_3678 (Saccharophagus degradans (strain 2-40 / ATCC 43961 / DSM 17024)).